The primary structure comprises 397 residues: Lysophospholipid transporter LplT (397 aa).

The Periplasmic portion of the chain corresponds to Met-1–Lys-17. A helical transmembrane segment spans residues Ala-18–Leu-38. Over Ala-39–Pro-52 the chain is Cytoplasmic. A helical membrane pass occupies residues Ile-53–Ala-73. Topologically, residues Asp-74 to Leu-90 are periplasmic. The chain crosses the membrane as a helical span at residues Leu-91–Val-111. At Gly-112–Thr-144 the chain is on the cytoplasmic side. The chain crosses the membrane as a helical span at residues Ile-145–Val-165. A topological domain (periplasmic) is located at residue Ala-166. Residues Leu-167–Leu-187 form a helical membrane-spanning segment. Over Ala-188–Ser-226 the chain is Cytoplasmic. A helical transmembrane segment spans residues Leu-227–Leu-247. Residues Gly-248–Thr-256 lie on the Periplasmic side of the membrane. A helical transmembrane segment spans residues Tyr-257 to Val-277. Topologically, residues Thr-278 to Glu-280 are cytoplasmic. Residues Thr-281 to Leu-301 traverse the membrane as a helical segment. Residues Gln-302 to Glu-304 are Periplasmic-facing. Residues Leu-305 to Pro-325 form a helical membrane-spanning segment. The Cytoplasmic segment spans residues Leu-326 to Ala-343. The chain crosses the membrane as a helical span at residues Ile-344–Leu-364. Over Ala-365–Val-366 the chain is Periplasmic. Residues Met-367–Ile-387 form a helical membrane-spanning segment. At Thr-388 to His-397 the chain is on the cytoplasmic side.

Belongs to the major facilitator superfamily. LplT (TC 2.A.1.42) family.

It is found in the cell inner membrane. Catalyzes the facilitated diffusion of 2-acyl-glycero-3-phosphoethanolamine (2-acyl-GPE) into the cell. The sequence is that of Lysophospholipid transporter LplT from Escherichia coli O81 (strain ED1a).